A 480-amino-acid polypeptide reads, in one-letter code: Nuclear receptor subfamily 6 group A member 1 (480 aa).

A disordered region spans residues 1 to 32 (MERDEPPPSGGGGGGGSAGFLEPPAALPPPPR). The segment at residues 57–132 (QRTCLICGDR…MGMNRKAIRE (76 aa)) is a DNA-binding region (nuclear receptor). Residues Cys60, Cys63, Cys77, Cys80, Cys96, Cys102, Cys112, and Cys115 each coordinate Zn(2+). 2 consecutive NR C4-type zinc fingers follow at residues 60–80 (CLIC…CEGC) and 96–120 (CSRD…LLKC). Disordered stretches follow at residues 131 to 150 (REDG…QISE) and 162 to 199 (FEEE…LSSS). The segment covering 165-177 (EANHWSNHGDSDH) has biased composition (basic and acidic residues). The tract at residues 172 to 253 (HGDSDHSSPG…RSLDPQSYSL (82 aa)) is sufficient for interaction with UIMC1. Residues 187–199 (SNQPSPGSTLSSS) are compositionally biased toward low complexity. The NR LBD domain maps to 249 to 480 (QSYSLIHQLL…HSCKTSVGKE (232 aa)).

The protein belongs to the nuclear hormone receptor family. NR6 subfamily. As to quaternary structure, homodimer. Interacts with UIMC1. In terms of tissue distribution, shows highest expression in the germ cells of the adult testis.

The protein resides in the nucleus. In terms of biological role, orphan nuclear receptor that binds to a response element containing the sequence 5'-TCAAGGTCA-3'. Acts as a regulator of embryonic stem cell pluripotency by mediating repression of POU5F1/OCT4: binds to the DR0 element within the POU5F1/OCT4 promoter and inhibits POU5F1/OCT4 expression during embryonic stem cell differentiation. Involved in the regulation of gene expression in germ cell development during gametogenesis. This Homo sapiens (Human) protein is Nuclear receptor subfamily 6 group A member 1 (NR6A1).